The sequence spans 180 residues: Early nodulin-16 (180 aa).

The N-terminal stretch at 1–22 (MASSSPILLMIIFSMWLLISHS) is a signal peptide. The 105-residue stretch at 25–129 (TDYLIGDSHN…GLKLAVVVQN (105 aa)) folds into the Phytocyanin domain. Asparagine 67 carries N-linked (GlcNAc...) asparagine glycosylation. Cysteine 83 and cysteine 117 form a disulfide bridge. N-linked (GlcNAc...) asparagine glycosylation occurs at asparagine 152. A lipid anchor (GPI-anchor amidated serine) is attached at serine 154. Residues 155 to 180 (GNKGGAAGLGFIMWLGVSLVMMMFLI) constitute a propeptide, removed in mature form.

Belongs to the early nodulin-like (ENODL) family. As to expression, expressed in developing nodules upon symbiosis with Sinorhizobium meliloti.

The protein localises to the symbiosome. It is found in the cell membrane. May act as a carbohydrate transporter. The protein is Early nodulin-16 of Medicago truncatula (Barrel medic).